The sequence spans 151 residues: MSEKLICNNKKAYHDYFIEEKFEAGMVLKGTEVKSLRIGKANLNDSFALVKNGEAFLHNLHISPYDFGNRENHDPDRMRKLLLHKKEIGKLFSMIREQGYTVVPLRLYFKDGLVKVEVGLAKGKKLYDKREDMKKKDMRRDVAVALKERNR.

The protein belongs to the SmpB family.

It is found in the cytoplasm. Functionally, required for rescue of stalled ribosomes mediated by trans-translation. Binds to transfer-messenger RNA (tmRNA), required for stable association of tmRNA with ribosomes. tmRNA and SmpB together mimic tRNA shape, replacing the anticodon stem-loop with SmpB. tmRNA is encoded by the ssrA gene; the 2 termini fold to resemble tRNA(Ala) and it encodes a 'tag peptide', a short internal open reading frame. During trans-translation Ala-aminoacylated tmRNA acts like a tRNA, entering the A-site of stalled ribosomes, displacing the stalled mRNA. The ribosome then switches to translate the ORF on the tmRNA; the nascent peptide is terminated with the 'tag peptide' encoded by the tmRNA and targeted for degradation. The ribosome is freed to recommence translation, which seems to be the essential function of trans-translation. This Geotalea uraniireducens (strain Rf4) (Geobacter uraniireducens) protein is SsrA-binding protein.